Consider the following 59-residue polypeptide: MAQIKITLTKSPIGRKPEQRKTVVALGLGKLNSSVVKEDNAAIRGMVNAISHLVTVEEA.

It belongs to the universal ribosomal protein uL30 family. Part of the 50S ribosomal subunit.

This Streptococcus agalactiae serotype Ia (strain ATCC 27591 / A909 / CDC SS700) protein is Large ribosomal subunit protein uL30.